The sequence spans 908 residues: Metabotropic glutamate receptor 8 (908 aa).

The first 33 residues, 1–33, serve as a signal peptide directing secretion; sequence MVCEGKRLASCPCFFLLTAKFYWILTMMQRTHS. At 34 to 583 the chain is on the extracellular side; sequence QEYAHSIRVD…IIKLEWHSPW (550 aa). Cysteines 64 and 106 form a disulfide. Asn-95 carries an N-linked (GlcNAc...) asparagine glycan. L-glutamate-binding positions include Ser-156, 177-179, and Tyr-227; that span reads AST. 7 cysteine pairs are disulfide-bonded: Cys-246-Cys-534, Cys-369-Cys-384, Cys-424-Cys-431, Cys-516-Cys-535, Cys-520-Cys-538, Cys-541-Cys-553, and Cys-556-Cys-569. Asn-298 carries N-linked (GlcNAc...) asparagine glycosylation. L-glutamate is bound at residue Asp-309. Residue Lys-401 coordinates L-glutamate. Residues Asn-452 and Asn-480 are each glycosylated (N-linked (GlcNAc...) asparagine). A glycan (N-linked (GlcNAc...) asparagine) is linked at Asn-565. A helical membrane pass occupies residues 584–608; that stretch reads AVVPVFIAILGIIATTFVIVTFVRY. Topologically, residues 609–620 are cytoplasmic; it reads NDTPIVRASGRE. Residues 621-641 form a helical membrane-spanning segment; that stretch reads LSYVLLTGIFLCYSITFLMIA. Over 642–647 the chain is Extracellular; it reads APDTII. A helical transmembrane segment spans residues 648-668; it reads CSFRRIFLGLGMCFSYAALLT. Topologically, residues 669-695 are cytoplasmic; sequence KTNRIHRIFEQGKKSVTAPKFISPASQ. Residues 696 to 716 form a helical membrane-spanning segment; that stretch reads LVITFSLISVQLLGVFVWFVV. Over 717 to 746 the chain is Extracellular; sequence DPPHTIIDYGEQRTLDPENARGVLKCDISD. Residues 747–768 traverse the membrane as a helical segment; the sequence is LSLICSLGYSILLMVTCTVYAI. The Cytoplasmic portion of the chain corresponds to 769–781; the sequence is KTRGVPETFNEAK. Residues 782-803 traverse the membrane as a helical segment; sequence PIGFTMYTTCIIWLAFIPIFFG. Residues 804–818 are Extracellular-facing; that stretch reads TAQSAEKMYIQTTTL. Residues 819–843 traverse the membrane as a helical segment; sequence TVSMSLSASVSLGMLYMPKVYIIIF. At 844–908 the chain is on the cytoplasmic side; it reads HPEQNVQKRK…TYISYSNHSI (65 aa). Lys-882 participates in a covalent cross-link: Glycyl lysine isopeptide (Lys-Gly) (interchain with G-Cter in SUMO1).

The protein belongs to the G-protein coupled receptor 3 family. Interacts with PICK1. Prominent expression in olfactory bulb, pontine gray, lateral reticular nucleus of the thalamus, and piriform cortex. Less abundant expression incerebral cortex, hippocampus, cerebellum, and mammillary body.

The protein resides in the cell membrane. Its function is as follows. G-protein coupled receptor for glutamate. Ligand binding causes a conformation change that triggers signaling via guanine nucleotide-binding proteins (G proteins) and modulates the activity of down-stream effectors. Signaling inhibits adenylate cyclase activity. This Rattus norvegicus (Rat) protein is Metabotropic glutamate receptor 8 (Grm8).